A 307-amino-acid polypeptide reads, in one-letter code: Aspartate carbamoyltransferase catalytic subunit (307 aa).

Residues Arg54 and Thr55 each coordinate carbamoyl phosphate. An L-aspartate-binding site is contributed by Lys83. Residues Arg104, His132, and Gln135 each coordinate carbamoyl phosphate. The L-aspartate site is built by Arg165 and Arg228. Residues Leu267 and Pro268 each contribute to the carbamoyl phosphate site.

The protein belongs to the aspartate/ornithine carbamoyltransferase superfamily. ATCase family. In terms of assembly, heterododecamer (2C3:3R2) of six catalytic PyrB chains organized as two trimers (C3), and six regulatory PyrI chains organized as three dimers (R2).

It carries out the reaction carbamoyl phosphate + L-aspartate = N-carbamoyl-L-aspartate + phosphate + H(+). The protein operates within pyrimidine metabolism; UMP biosynthesis via de novo pathway; (S)-dihydroorotate from bicarbonate: step 2/3. Catalyzes the condensation of carbamoyl phosphate and aspartate to form carbamoyl aspartate and inorganic phosphate, the committed step in the de novo pyrimidine nucleotide biosynthesis pathway. The polypeptide is Aspartate carbamoyltransferase catalytic subunit (Clostridium botulinum (strain ATCC 19397 / Type A)).